Reading from the N-terminus, the 469-residue chain is Argininosuccinate lyase (469 aa).

It belongs to the lyase 1 family. Argininosuccinate lyase subfamily.

Its subcellular location is the cytoplasm. The enzyme catalyses 2-(N(omega)-L-arginino)succinate = fumarate + L-arginine. The protein operates within amino-acid biosynthesis; L-arginine biosynthesis; L-arginine from L-ornithine and carbamoyl phosphate: step 3/3. The polypeptide is Argininosuccinate lyase (Burkholderia vietnamiensis (strain G4 / LMG 22486) (Burkholderia cepacia (strain R1808))).